The primary structure comprises 276 residues: Melibiose/raffinose/stachyose import permease protein MelC (276 aa).

Transmembrane regions (helical) follow at residues 11–31 (IITL…YILL), 74–94 (IITG…AYPL), 104–124 (AVFA…MVPL), 139–159 (IAIF…YSGF), 186–206 (IVFP…CVFI), and 240–260 (LHLV…LFLA). The 193-residue stretch at 69-261 (FINTMIITGF…LPMVVLFLAL (193 aa)) folds into the ABC transmembrane type-1 domain.

This sequence belongs to the binding-protein-dependent transport system permease family. The complex is composed of two ATP-binding proteins (MsmX), two transmembrane proteins (MelC and MelD) and a solute-binding protein (MelE).

The protein localises to the cell membrane. In terms of biological role, part of the ABC transporter complex MelEDC-MsmX involved in melibiose, raffinose and stachyose import. Probably responsible for the translocation of the substrate across the membrane. The sequence is that of Melibiose/raffinose/stachyose import permease protein MelC from Bacillus subtilis (strain 168).